The primary structure comprises 2248 residues: Zinc finger protein lin-13 (2248 aa).

Residues 1–189 form a disordered region; the sequence is MDEFELFQQL…TYASQYSRPP (189 aa). Residues 29-38 are compositionally biased toward polar residues; the sequence is QQANNNQSAP. A compositionally biased stretch (basic and acidic residues) spans 54 to 92; it reads KQREEEEAQRLADFMQKDMKEPAVKRKRGSEEYKKDPLE. The segment covering 145 to 155 has biased composition (acidic residues); that stretch reads ELDENYMEENE. The Required for interaction with hpl-2 isoform a signature appears at 440-444; the sequence is PLVPV. Residues 503 to 525 form a C2H2-type 1 zinc finger; that stretch reads HTCIKCGKTFGTEFMLKHHAQSH. The interval 603-665 is disordered; it reads KTKKENRNIT…FTSSKQKKKR (63 aa). Positions 605 to 620 are enriched in basic and acidic residues; it reads KKENRNITDSNEKEFS. 6 C2H2-type zinc fingers span residues 812–837, 959–982, 1140–1162, 1556–1578, 1601–1623, and 1657–1680; these read VRCI…SDVH, YSCS…TRFH, LMCY…MDDH, FKCQ…MRDH, WLCR…MAIH, and YSCG…SVAH. The segment covering 1859-1877 has biased composition (polar residues); it reads PRSSLQTNGSSMGSVTTNG. The disordered stretch occupies residues 1859–1900; the sequence is PRSSLQTNGSSMGSVTTNGGRVVRPSPPNSMNVTLRRAPPQQ.

Interacts (via PLVPV motif) with chromobox protein homolog hpl-2 (via chromo (shadow subtype) domain); the interaction is direct and influences localization of hpl-2 to nuclear foci. In terms of tissue distribution, in the L3 stage, expressed in syncytial hypodermal cell 7, body wall muscles, intestinal cells, distal tip cells and many neurons.

The protein resides in the nucleus. Functionally, involved in repression of vulval fate, possibly by a tumor suppressor protein Rb-mediated mechanism. May act in a common pathway with retinoblastoma-like protein homolog lin-35 and hpl-2 to influence the ER stress response in the intestine. Plays a role in recruiting chromobox protein homolog hpl-2 to specific chromatin sites. The protein is Zinc finger protein lin-13 (lin-13) of Caenorhabditis elegans.